Reading from the N-terminus, the 662-residue chain is Methionine--tRNA ligase (662 aa).

The short motif at 13 to 23 (PYTNGPCHLGH) is the 'HIGH' region element. 4 residues coordinate Zn(2+): Cys-144, Cys-147, Cys-156, and Cys-160. The short motif at 326-330 (KFSKS) is the 'KMSKS' region element. Lys-329 is a binding site for ATP. The 99-residue stretch at 564-662 (DFSKVEIKTG…KPVEPGTKIR (99 aa)) folds into the tRNA-binding domain.

This sequence belongs to the class-I aminoacyl-tRNA synthetase family. MetG type 1 subfamily. In terms of assembly, homodimer. Zn(2+) serves as cofactor.

Its subcellular location is the cytoplasm. It carries out the reaction tRNA(Met) + L-methionine + ATP = L-methionyl-tRNA(Met) + AMP + diphosphate. Is required not only for elongation of protein synthesis but also for the initiation of all mRNA translation through initiator tRNA(fMet) aminoacylation. The protein is Methionine--tRNA ligase of Methanoregula boonei (strain DSM 21154 / JCM 14090 / 6A8).